An 814-amino-acid polypeptide reads, in one-letter code: Putative serine/threonine-protein kinase-like protein CCR3 (814 aa).

A signal peptide spans 1 to 30 (MKRFINSTVTFSVTVTIAVIIFFLLSPVTS). Asparagine 6, asparagine 68, asparagine 136, asparagine 215, asparagine 226, asparagine 251, asparagine 260, asparagine 275, asparagine 299, and asparagine 309 each carry an N-linked (GlcNAc...) asparagine glycan. The Extracellular portion of the chain corresponds to 31–393 (LGSGSTYAVV…SSPPSKALTR (363 aa)). The span at 366–381 (SQFPLPPPPPPPPPSP) shows a compositional bias: pro residues. The disordered stretch occupies residues 366-388 (SQFPLPPPPPPPPPSPSTSSPPS). The chain crosses the membrane as a helical span at residues 394 to 414 (GLLAFAIVGSVGAFAGICSVV). At 415–814 (YCLWTGVCLG…SSGICSIVSD (400 aa)) the chain is on the cytoplasmic side. The segment at 433 to 478 (QPTITRGGSNSRSNSSNSRSLSIRRQGSRMLSMRRQRSGTSSMKHA) is disordered. A compositionally biased stretch (low complexity) spans 441 to 457 (SNSRSNSSNSRSLSIRR). In terms of domain architecture, Protein kinase spans 496 to 794 (FSLENKIGSG…DIVGNLERAL (299 aa)). ATP contacts are provided by residues 502–510 (IGSGSFGVV) and lysine 524. Catalysis depends on aspartate 631, which acts as the Proton acceptor.

Belongs to the protein kinase superfamily. Ser/Thr protein kinase family. In terms of assembly, homodimer. Expressed in roots, leaves, shoot apical meristems (SAM), and floral buds.

It localises to the membrane. The enzyme catalyses L-seryl-[protein] + ATP = O-phospho-L-seryl-[protein] + ADP + H(+). It carries out the reaction L-threonyl-[protein] + ATP = O-phospho-L-threonyl-[protein] + ADP + H(+). Functionally, serine/threonine-protein kinase. This Arabidopsis thaliana (Mouse-ear cress) protein is Putative serine/threonine-protein kinase-like protein CCR3 (CCR3).